Here is a 73-residue protein sequence, read N- to C-terminus: uncharacterized protein (73 aa).

Positions 1-22 are cleaved as a signal peptide; that stretch reads MKILGVTGFILICLLAISVLMD. A helical membrane pass occupies residues 44–66; the sequence is TFAEWVVLLFFVLVLVREMYVIY.

Its subcellular location is the membrane. This is an uncharacterized protein from Bacillus subtilis (strain 168).